The primary structure comprises 142 residues: Universal stress protein G (142 aa).

The protein belongs to the universal stress protein A family.

The polypeptide is Universal stress protein G (uspG) (Salmonella typhi).